The chain runs to 277 residues: Probable septum site-determining protein MinC (277 aa).

Positions 107 to 168 are disordered; that stretch reads TEGLLPGRKG…ESGPQVSHYD (62 aa). Over residues 122 to 142 the composition is skewed to basic and acidic residues; it reads GKPDGKAAEGRAPDHGTEGRA.

Belongs to the MinC family. Interacts with MinD and FtsZ.

Cell division inhibitor that blocks the formation of polar Z ring septums. Rapidly oscillates between the poles of the cell to destabilize FtsZ filaments that have formed before they mature into polar Z rings. Prevents FtsZ polymerization. The protein is Probable septum site-determining protein MinC of Mesorhizobium japonicum (strain LMG 29417 / CECT 9101 / MAFF 303099) (Mesorhizobium loti (strain MAFF 303099)).